We begin with the raw amino-acid sequence, 296 residues long: Phosphoribosylaminoimidazole-succinocarboxamide synthase (296 aa).

The protein belongs to the SAICAR synthetase family.

It catalyses the reaction 5-amino-1-(5-phospho-D-ribosyl)imidazole-4-carboxylate + L-aspartate + ATP = (2S)-2-[5-amino-1-(5-phospho-beta-D-ribosyl)imidazole-4-carboxamido]succinate + ADP + phosphate + 2 H(+). It functions in the pathway purine metabolism; IMP biosynthesis via de novo pathway; 5-amino-1-(5-phospho-D-ribosyl)imidazole-4-carboxamide from 5-amino-1-(5-phospho-D-ribosyl)imidazole-4-carboxylate: step 1/2. This Geobacter sulfurreducens (strain ATCC 51573 / DSM 12127 / PCA) protein is Phosphoribosylaminoimidazole-succinocarboxamide synthase.